The following is a 422-amino-acid chain: Histidine--tRNA ligase (422 aa).

The protein belongs to the class-II aminoacyl-tRNA synthetase family. In terms of assembly, homodimer.

It localises to the cytoplasm. The enzyme catalyses tRNA(His) + L-histidine + ATP = L-histidyl-tRNA(His) + AMP + diphosphate + H(+). This chain is Histidine--tRNA ligase, found in Vibrio vulnificus (strain CMCP6).